The primary structure comprises 267 residues: Tryptophan synthase alpha chain (267 aa).

Residues E47 and D58 each act as proton acceptor in the active site.

The protein belongs to the TrpA family. As to quaternary structure, tetramer of two alpha and two beta chains.

The catalysed reaction is (1S,2R)-1-C-(indol-3-yl)glycerol 3-phosphate + L-serine = D-glyceraldehyde 3-phosphate + L-tryptophan + H2O. The protein operates within amino-acid biosynthesis; L-tryptophan biosynthesis; L-tryptophan from chorismate: step 5/5. In terms of biological role, the alpha subunit is responsible for the aldol cleavage of indoleglycerol phosphate to indole and glyceraldehyde 3-phosphate. This Prosthecochloris aestuarii (strain DSM 271 / SK 413) protein is Tryptophan synthase alpha chain.